The following is a 90-amino-acid chain: MTRTVMCRKYQEELPGLERPPYPGAKGQDIFEHISQKAWADWQKHQTMLINEKRLNMMNAEDRKFLQAEMDKFFAGEEYAQAEGYVPPAE.

The protein belongs to the Fe(2+)-trafficking protein family.

Could be a mediator in iron transactions between iron acquisition and iron-requiring processes, such as synthesis and/or repair of Fe-S clusters in biosynthetic enzymes. The chain is Probable Fe(2+)-trafficking protein from Pseudomonas putida (strain ATCC 700007 / DSM 6899 / JCM 31910 / BCRC 17059 / LMG 24140 / F1).